The following is a 709-amino-acid chain: Threonine--tRNA ligase, mitochondrial 1 (709 aa).

The transit peptide at 1–21 directs the protein to the mitochondrion; the sequence is MLLRLTARSIRRFTTSSSSLP. Residues 73–135 enclose the TGS domain; that stretch reads DPIKVTLPDG…EGDCKLELFK (63 aa). Residues cysteine 407, histidine 458, and histidine 584 each coordinate Zn(2+).

The protein belongs to the class-II aminoacyl-tRNA synthetase family.

The protein localises to the mitochondrion. The protein resides in the cytoplasm. It localises to the cytosol. It carries out the reaction tRNA(Thr) + L-threonine + ATP = L-threonyl-tRNA(Thr) + AMP + diphosphate + H(+). The polypeptide is Threonine--tRNA ligase, mitochondrial 1 (Arabidopsis thaliana (Mouse-ear cress)).